We begin with the raw amino-acid sequence, 96 residues long: Putative pterin-4-alpha-carbinolamine dehydratase (96 aa).

This sequence belongs to the pterin-4-alpha-carbinolamine dehydratase family.

The enzyme catalyses (4aS,6R)-4a-hydroxy-L-erythro-5,6,7,8-tetrahydrobiopterin = (6R)-L-erythro-6,7-dihydrobiopterin + H2O. The sequence is that of Putative pterin-4-alpha-carbinolamine dehydratase from Prochlorococcus marinus (strain MIT 9515).